The sequence spans 221 residues: Ependymin-2 (221 aa).

Positions 1-21 (MQDFAFAALSIWLCLGATALA) are cleaved as a signal peptide. N-linked (GlcNAc...) asparagine glycosylation is found at Asn-33, Asn-73, and Asn-97.

It belongs to the ependymin family. Post-translationally, binds calcium through the terminal sialic acids. In terms of tissue distribution, EPDs are synthesized in the meninx and secreted in the cerebrospinal fluid.

The protein localises to the secreted. Functionally, may play a role in neural plasticity. May be involved during axon regeneration. This Oncorhynchus mykiss (Rainbow trout) protein is Ependymin-2 (epd2).